We begin with the raw amino-acid sequence, 122 residues long: MIQQQTLLKVADNSGAKEIMCIRVLGGSKRKFGNIGDVIVASVKSATPGGVVKKGEVVKAVIVRSVRGLRRADGSYIKFDENAAVIIKDDKQPRGTRIFGPVARELRDNEFNKILSLAPEVL.

It belongs to the universal ribosomal protein uL14 family. Part of the 50S ribosomal subunit. Forms a cluster with proteins L3 and L19. In the 70S ribosome, L14 and L19 interact and together make contacts with the 16S rRNA in bridges B5 and B8.

Functionally, binds to 23S rRNA. Forms part of two intersubunit bridges in the 70S ribosome. This chain is Large ribosomal subunit protein uL14, found in Clostridium perfringens (strain ATCC 13124 / DSM 756 / JCM 1290 / NCIMB 6125 / NCTC 8237 / Type A).